The primary structure comprises 372 residues: Spermidine/putrescine import ATP-binding protein PotA (372 aa).

Positions 11-241 (IELRSIKKSY…PANLFVARFI (231 aa)) constitute an ABC transporter domain. Residue 43–50 (GPSGCGKT) participates in ATP binding.

It belongs to the ABC transporter superfamily. Spermidine/putrescine importer (TC 3.A.1.11.1) family. As to quaternary structure, the complex is composed of two ATP-binding proteins (PotA), two transmembrane proteins (PotB and PotC) and a solute-binding protein (PotD).

The protein resides in the cell inner membrane. It carries out the reaction ATP + H2O + polyamine-[polyamine-binding protein]Side 1 = ADP + phosphate + polyamineSide 2 + [polyamine-binding protein]Side 1.. Part of the ABC transporter complex PotABCD involved in spermidine/putrescine import. Responsible for energy coupling to the transport system. This is Spermidine/putrescine import ATP-binding protein PotA from Haemophilus influenzae (strain 86-028NP).